Consider the following 379-residue polypeptide: S-adenosylmethionine:tRNA ribosyltransferase-isomerase (379 aa).

Residues 35–58 are disordered; that stretch reads AESRPHAESVPHAESRPHAESAFS.

The protein belongs to the QueA family. In terms of assembly, monomer.

Its subcellular location is the cytoplasm. The enzyme catalyses 7-aminomethyl-7-carbaguanosine(34) in tRNA + S-adenosyl-L-methionine = epoxyqueuosine(34) in tRNA + adenine + L-methionine + 2 H(+). Its pathway is tRNA modification; tRNA-queuosine biosynthesis. Transfers and isomerizes the ribose moiety from AdoMet to the 7-aminomethyl group of 7-deazaguanine (preQ1-tRNA) to give epoxyqueuosine (oQ-tRNA). In Rhizobium leguminosarum bv. trifolii (strain WSM2304), this protein is S-adenosylmethionine:tRNA ribosyltransferase-isomerase.